Reading from the N-terminus, the 497-residue chain is MSTDKKTLGEKPNSTKPELSEELIAELKKQRILEKNRPYKKMIYVDNKVQRKHRHENIAFLKTLHENKESDVPKKRRGRKPKHAPLKEKNNLKLFDILEGSLKSHIENDDTNTVINLLTEAWEKKSKKKQKNITLSNKEIISVLAKFELPEDEIIYVLDELRDKGIQLQHDVEEHIHEFRANQDLSIIDEDIEELTSKNISNRDKVDDNVRFFLGSLDFSKMLDFESEQRIAKVLNSTDEESRKYAINQLVTSNLRLVVSIAKKHLERGLDFNDLIQEGNLGLLKAISKFNWSLGNKFSTYATWWIKQAITRAIADQARTVRIPVHMVETINRLAKAERALYQELGREPTDEELAEKMGGQAEGFNVKKIAEIKRLSLDPVSLDKTVGHDEESQFGDFVKDTDAQTPDEFTESRSNSEKIDELLNNNLSEQEELIVRMRIGMPPYNEPKTLDEVGQKILIPREKIRQIENKAIRKLRHAVRNNPISMSFLRINEKKD.

2 disordered regions span residues 1–20 and 62–86; these read MSTD…PELS and KTLH…HAPL. Residues 63 to 73 show a composition bias toward basic and acidic residues; it reads TLHENKESDVP. Residues 74-84 are compositionally biased toward basic residues; that stretch reads KKRRGRKPKHA. Residues 250 to 320 are sigma-70 factor domain-2; the sequence is LVTSNLRLVV…TRAIADQART (71 aa). Positions 274–277 match the Interaction with polymerase core subunit RpoC motif; it reads DLIQ. A sigma-70 factor domain-3 region spans residues 329–410; it reads ETINRLAKAE…DTDAQTPDEF (82 aa). Residues 423-478 are sigma-70 factor domain-4; the sequence is LLNNNLSEQEELIVRMRIGMPPYNEPKTLDEVGQKILIPREKIRQIENKAIRKLRH. The segment at residues 451-470 is a DNA-binding region (H-T-H motif); the sequence is LDEVGQKILIPREKIRQIEN.

The protein belongs to the sigma-70 factor family. RpoD/SigA subfamily. Interacts transiently with the RNA polymerase catalytic core.

Its subcellular location is the cytoplasm. Functionally, sigma factors are initiation factors that promote the attachment of RNA polymerase to specific initiation sites and are then released. This sigma factor is the primary sigma factor during exponential growth. The chain is RNA polymerase sigma factor SigA from Mycoplasma genitalium (strain ATCC 33530 / DSM 19775 / NCTC 10195 / G37) (Mycoplasmoides genitalium).